The sequence spans 3912 residues: Chondramide synthase cmdD (3912 aa).

Residues Ala-1411 to Lys-1485 enclose the Carrier 1 domain. Ser-1446 carries the post-translational modification O-(pantetheine 4'-phosphoryl)serine. Acidic residues predominate over residues Ala-1995 to Glu-2029. A disordered region spans residues Ala-1995–Asn-2030. Residues Ala-2989–Leu-3064 form the Carrier 2 domain. Ser-3024 is modified (O-(pantetheine 4'-phosphoryl)serine).

It belongs to the ATP-dependent AMP-binding enzyme family. The cofactor is pantetheine 4'-phosphate.

Involved in the synthesis of chondramides. Activates R-beta-tyrosine and probably phenylalanine. The protein is Chondramide synthase cmdD of Chondromyces crocatus.